Here is a 289-residue protein sequence, read N- to C-terminus: Elongation factor Ts (289 aa).

An involved in Mg(2+) ion dislocation from EF-Tu region spans residues 82–85 (TDFL).

It belongs to the EF-Ts family.

The protein resides in the cytoplasm. Associates with the EF-Tu.GDP complex and induces the exchange of GDP to GTP. It remains bound to the aminoacyl-tRNA.EF-Tu.GTP complex up to the GTP hydrolysis stage on the ribosome. The chain is Elongation factor Ts from Azotobacter vinelandii (strain DJ / ATCC BAA-1303).